Reading from the N-terminus, the 504-residue chain is Deoxyguanosinetriphosphate triphosphohydrolase (504 aa).

An HD domain is found at 66–273 (RLTHSLEVQQ…MEAADDISYC (208 aa)).

This sequence belongs to the dGTPase family. Type 1 subfamily. As to quaternary structure, homotetramer. Mg(2+) is required as a cofactor.

The catalysed reaction is dGTP + H2O = 2'-deoxyguanosine + triphosphate + H(+). Its function is as follows. dGTPase preferentially hydrolyzes dGTP over the other canonical NTPs. This chain is Deoxyguanosinetriphosphate triphosphohydrolase, found in Klebsiella pneumoniae (strain 342).